A 493-amino-acid polypeptide reads, in one-letter code: Growth-regulating factor 8 (493 aa).

Positions 149–184 (AFSEAQWHELERQRNIYKYMMASVPVPPELLTPFPK) constitute a QLQ domain. Residues 243–287 (DLEPWRCKRTDGKKWRCSRNVIPDQKYCERHTHKSRPRSRKHVES) enclose the WRC domain. Short sequence motifs (bipartite nuclear localization signal) lie at residues 248–258 (RCKRTDGKKWR) and 276–283 (KSRPRSRK). The segment at 270–302 (CERHTHKSRPRSRKHVESSHQSSHHNDIRTAKN) is disordered. Over residues 273 to 283 (HTHKSRPRSRK) the composition is skewed to basic residues.

It belongs to the GRF family. As to expression, predominantly expressed in shoot tips and flowers.

Its subcellular location is the nucleus. Functionally, transcription activator that plays a role in the regulation of cell expansion in leaf and cotyledons tissues. Component of a network formed by miR396, the GRFs and their interacting factors (GIFs) acting in the regulation of meristem function, at least partially through the control of cell proliferation. This is Growth-regulating factor 8 (GRF8) from Arabidopsis thaliana (Mouse-ear cress).